The primary structure comprises 608 residues: Zinc metalloproteinase-disintegrin-like agkihagin (608 aa).

The signal sequence occupies residues 1 to 20 (MIQVLLVTICLAAFPYQGSS). The propeptide occupies 21-189 (IILESGNVND…KKASQSNLTP (169 aa)). The region spanning 199 to 395 (KFVKLFLVAD…NMPQCILKKP (197 aa)) is the Peptidase M12B domain. 3 disulfide bridges follow: Cys-310–Cys-390, Cys-350–Cys-374, and Cys-352–Cys-357. His-335 lines the Zn(2+) pocket. Glu-336 is an active-site residue. The Zn(2+) site is built by His-339 and His-345. The 86-residue stretch at 403 to 488 (PPVCGNYFVE…ADCTDRFQKN (86 aa)) folds into the Disintegrin domain. The Ca(2+) site is built by Val-405, Asn-408, Phe-410, Glu-412, Glu-415, and Asp-418. Disulfide bonds link Cys-406–Cys-435, Cys-417–Cys-430, Cys-419–Cys-425, Cys-429–Cys-452, Cys-443–Cys-449, Cys-448–Cys-474, Cys-461–Cys-481, Cys-468–Cys-499, Cys-492–Cys-504, Cys-511–Cys-561, Cys-526–Cys-570, Cys-539–Cys-549, Cys-556–Cys-596, and Cys-590–Cys-601. The D/ECD-tripeptide signature appears at 467 to 469 (ECD). Asp-469, Met-470, Asp-472, Asp-483, and Arg-484 together coordinate Ca(2+). A glycan (N-linked (GlcNAc...) asparagine) is linked at Asn-501.

It belongs to the venom metalloproteinase (M12B) family. P-III subfamily. P-IIIc sub-subfamily. Homodimer; disulfide-linked. Zn(2+) serves as cofactor. In terms of tissue distribution, expressed by the venom gland.

It localises to the secreted. Inhibited by EDTA and EGTA. Not inhibited by PMSF, antipain, pepstatin, and iodoacetamide. In terms of biological role, strongly inhibits the collagen-induced human platelet aggregation. Hydrolyzes the Aalpha-chain of fibrinogen (FGA), without cleavage of Bbeta- and gamma-chains. Induces apoptosis and strongly inhibits proliferation of endothelial cells as well as adhesion of the cells to extracellular matrix proteins. The protein is Zinc metalloproteinase-disintegrin-like agkihagin of Deinagkistrodon acutus (Hundred-pace snake).